The chain runs to 171 residues: Peptide deformylase (171 aa).

2 residues coordinate Fe cation: Cys91 and His133. Residue Glu134 is part of the active site. His137 contacts Fe cation.

It belongs to the polypeptide deformylase family. The cofactor is Fe(2+).

The catalysed reaction is N-terminal N-formyl-L-methionyl-[peptide] + H2O = N-terminal L-methionyl-[peptide] + formate. Removes the formyl group from the N-terminal Met of newly synthesized proteins. Requires at least a dipeptide for an efficient rate of reaction. N-terminal L-methionine is a prerequisite for activity but the enzyme has broad specificity at other positions. The sequence is that of Peptide deformylase from Haemophilus ducreyi (strain 35000HP / ATCC 700724).